The sequence spans 608 residues: Isocitrate dehydrogenase kinase/phosphatase (608 aa).

ATP is bound by residues 327-333 and K348; that span reads APGIKGL. D383 is a catalytic residue.

Belongs to the AceK family.

It localises to the cytoplasm. The enzyme catalyses L-seryl-[isocitrate dehydrogenase] + ATP = O-phospho-L-seryl-[isocitrate dehydrogenase] + ADP + H(+). Functionally, bifunctional enzyme which can phosphorylate or dephosphorylate isocitrate dehydrogenase (IDH) on a specific serine residue. This is a regulatory mechanism which enables bacteria to bypass the Krebs cycle via the glyoxylate shunt in response to the source of carbon. When bacteria are grown on glucose, IDH is fully active and unphosphorylated, but when grown on acetate or ethanol, the activity of IDH declines drastically concomitant with its phosphorylation. This is Isocitrate dehydrogenase kinase/phosphatase from Burkholderia ambifaria (strain ATCC BAA-244 / DSM 16087 / CCUG 44356 / LMG 19182 / AMMD) (Burkholderia cepacia (strain AMMD)).